Reading from the N-terminus, the 189-residue chain is ATP synthase subunit delta (189 aa).

It belongs to the ATPase delta chain family. In terms of assembly, F-type ATPases have 2 components, F(1) - the catalytic core - and F(0) - the membrane proton channel. F(1) has five subunits: alpha(3), beta(3), gamma(1), delta(1), epsilon(1). F(0) has three main subunits: a(1), b(2) and c(10-14). The alpha and beta chains form an alternating ring which encloses part of the gamma chain. F(1) is attached to F(0) by a central stalk formed by the gamma and epsilon chains, while a peripheral stalk is formed by the delta and b chains.

The protein localises to the cell inner membrane. Its function is as follows. F(1)F(0) ATP synthase produces ATP from ADP in the presence of a proton or sodium gradient. F-type ATPases consist of two structural domains, F(1) containing the extramembraneous catalytic core and F(0) containing the membrane proton channel, linked together by a central stalk and a peripheral stalk. During catalysis, ATP synthesis in the catalytic domain of F(1) is coupled via a rotary mechanism of the central stalk subunits to proton translocation. In terms of biological role, this protein is part of the stalk that links CF(0) to CF(1). It either transmits conformational changes from CF(0) to CF(1) or is implicated in proton conduction. The protein is ATP synthase subunit delta of Methylorubrum populi (strain ATCC BAA-705 / NCIMB 13946 / BJ001) (Methylobacterium populi).